Reading from the N-terminus, the 153-residue chain is Hemoglobin-3 (153 aa).

Ser2 is modified (N-acetylserine). Residues 4–150 form the Globin domain; sequence GLTGPQKAAL…ICRVQGDFMK (147 aa). His99 is a binding site for heme b.

It belongs to the globin family. In terms of assembly, homotetramer.

The protein localises to the cytoplasm. The sequence is that of Hemoglobin-3 from Phacoides pectinatus (Thick lucine).